Reading from the N-terminus, the 242-residue chain is uncharacterized protein (242 aa).

This is an uncharacterized protein from Agrobacterium vitis (Rhizobium vitis).